The chain runs to 228 residues: Cytochrome c oxidase subunit 2 (228 aa).

Topologically, residues 1 to 26 (MATWANLGLQNSSSPLMEQLNFFHDH) are mitochondrial intermembrane. A helical transmembrane segment spans residues 27 to 48 (TVLILIMITVMITYVMGMLFFN). Topologically, residues 49–62 (KFTNRYLLHGQTIE) are mitochondrial matrix. The chain crosses the membrane as a helical span at residues 63-82 (IIWTILPAIILMFIAFPSLR). Residues 83–228 (LLYLLDEINS…FIKWVSSQLN (146 aa)) are Mitochondrial intermembrane-facing. Residues histidine 161, cysteine 196, glutamate 198, cysteine 200, histidine 204, and methionine 207 each coordinate Cu cation. Glutamate 198 is a binding site for Mg(2+).

Belongs to the cytochrome c oxidase subunit 2 family. As to quaternary structure, component of the cytochrome c oxidase (complex IV, CIV), a multisubunit enzyme composed of a catalytic core of 3 subunits and several supernumerary subunits. The complex exists as a monomer or a dimer and forms supercomplexes (SCs) in the inner mitochondrial membrane with ubiquinol-cytochrome c oxidoreductase (cytochrome b-c1 complex, complex III, CIII). The cofactor is Cu cation.

It is found in the mitochondrion inner membrane. It catalyses the reaction 4 Fe(II)-[cytochrome c] + O2 + 8 H(+)(in) = 4 Fe(III)-[cytochrome c] + 2 H2O + 4 H(+)(out). Functionally, component of the cytochrome c oxidase, the last enzyme in the mitochondrial electron transport chain which drives oxidative phosphorylation. The respiratory chain contains 3 multisubunit complexes succinate dehydrogenase (complex II, CII), ubiquinol-cytochrome c oxidoreductase (cytochrome b-c1 complex, complex III, CIII) and cytochrome c oxidase (complex IV, CIV), that cooperate to transfer electrons derived from NADH and succinate to molecular oxygen, creating an electrochemical gradient over the inner membrane that drives transmembrane transport and the ATP synthase. Cytochrome c oxidase is the component of the respiratory chain that catalyzes the reduction of oxygen to water. Electrons originating from reduced cytochrome c in the intermembrane space (IMS) are transferred via the dinuclear copper A center (CU(A)) of subunit 2 and heme A of subunit 1 to the active site in subunit 1, a binuclear center (BNC) formed by heme A3 and copper B (CU(B)). The BNC reduces molecular oxygen to 2 water molecules using 4 electrons from cytochrome c in the IMS and 4 protons from the mitochondrial matrix. This is Cytochrome c oxidase subunit 2 (COII) from Culex quinquefasciatus (Southern house mosquito).